The sequence spans 249 residues: Ubiquinone/menaquinone biosynthesis C-methyltransferase UbiE (249 aa).

S-adenosyl-L-methionine-binding positions include Thr74, Asp93, and 121–122 (DA).

It belongs to the class I-like SAM-binding methyltransferase superfamily. MenG/UbiE family.

It catalyses the reaction a 2-demethylmenaquinol + S-adenosyl-L-methionine = a menaquinol + S-adenosyl-L-homocysteine + H(+). It carries out the reaction a 2-methoxy-6-(all-trans-polyprenyl)benzene-1,4-diol + S-adenosyl-L-methionine = a 5-methoxy-2-methyl-3-(all-trans-polyprenyl)benzene-1,4-diol + S-adenosyl-L-homocysteine + H(+). The protein operates within quinol/quinone metabolism; menaquinone biosynthesis; menaquinol from 1,4-dihydroxy-2-naphthoate: step 2/2. It functions in the pathway cofactor biosynthesis; ubiquinone biosynthesis. Methyltransferase required for the conversion of demethylmenaquinol (DMKH2) to menaquinol (MKH2) and the conversion of 2-polyprenyl-6-methoxy-1,4-benzoquinol (DDMQH2) to 2-polyprenyl-3-methyl-6-methoxy-1,4-benzoquinol (DMQH2). The protein is Ubiquinone/menaquinone biosynthesis C-methyltransferase UbiE of Acidiphilium cryptum (strain JF-5).